A 526-amino-acid polypeptide reads, in one-letter code: METVVDHHVIEVDEFDALFIEVKTEAAPVESVVSVAPIPARFPAKLHARKIAAELNASDGLVFLPGEPSRSYEDSDMGPAFRQRRYFYYLSGANFADCAVTYELASDRLILWVPYVEPRQVLWFGSTPGISECLKQFDVDDVRYTTQLNKFLYRHLTPGSTLYVIHADQVPLHGDFLQSAAEVRIDVTSLQPAMDQARVVKTDYEVAMIRKAAAVSALAHRRVAEKLLRLENESEIEAVYQAWCTTSGAREQAYAIIAGSGKNASTLHYDANNEPLEGREVVVFDAGCEWHCYASDITRTLPISGKFSAEAKAVYDVVAKMQDECISFIRPGTLFFDLHIHASRVAQQGLLKLGVLKGDPAEVWDAGTVAAFFPHGLGHHVGLEVHDVSGRERLLLLNNVMGAQGGRVGKREVVTPEMLGAMVQASAPGAAAAAAPPPYKGRQYLRKNMIVTVEPGIYFCREYIEGYFLSNPRHARFINKTVLERYYRVGGVRIEDDILVTDDGYENLSTGAPKGEELLRVINGKA.

Residues aspartate 285, aspartate 296, glutamate 454, and glutamate 495 each coordinate Mn(2+).

This sequence belongs to the peptidase M24B family. Mn(2+) is required as a cofactor.

It catalyses the reaction Release of any N-terminal amino acid, including proline, that is linked to proline, even from a dipeptide or tripeptide.. Its function is as follows. Catalyzes the removal of a penultimate prolyl residue from the N-termini of peptides. The protein is Probable Xaa-Pro aminopeptidase GLRG_02280 of Colletotrichum graminicola (strain M1.001 / M2 / FGSC 10212) (Maize anthracnose fungus).